A 299-amino-acid polypeptide reads, in one-letter code: Pyridoxal 5'-phosphate synthase subunit PdxS (299 aa).

D-ribose 5-phosphate is bound at residue aspartate 29. Catalysis depends on lysine 86, which acts as the Schiff-base intermediate with D-ribose 5-phosphate. Glycine 158 provides a ligand contact to D-ribose 5-phosphate. Residue arginine 170 coordinates D-glyceraldehyde 3-phosphate. D-ribose 5-phosphate is bound by residues glycine 219 and 240 to 241 (GS).

This sequence belongs to the PdxS/SNZ family. As to quaternary structure, in the presence of PdxT, forms a dodecamer of heterodimers.

The enzyme catalyses aldehydo-D-ribose 5-phosphate + D-glyceraldehyde 3-phosphate + L-glutamine = pyridoxal 5'-phosphate + L-glutamate + phosphate + 3 H2O + H(+). The protein operates within cofactor biosynthesis; pyridoxal 5'-phosphate biosynthesis. In terms of biological role, catalyzes the formation of pyridoxal 5'-phosphate from ribose 5-phosphate (RBP), glyceraldehyde 3-phosphate (G3P) and ammonia. The ammonia is provided by the PdxT subunit. Can also use ribulose 5-phosphate and dihydroxyacetone phosphate as substrates, resulting from enzyme-catalyzed isomerization of RBP and G3P, respectively. The protein is Pyridoxal 5'-phosphate synthase subunit PdxS of Mycobacterium bovis (strain ATCC BAA-935 / AF2122/97).